We begin with the raw amino-acid sequence, 573 residues long: Maestro heat-like repeat-containing protein family member 9 (573 aa).

HEAT repeat units follow at residues 118–155 (LYKLQILKEMLVWMSKDSSYLQERIMVIINKVLRFTVT), 252–289 (PLLTDFVQSLLMKLSSPDDKIASDAASILIFTLEFHAE), 292–328 (TMVSKIVDAIYRQLCDNNCMKDVMLQVITLLTCTSPK), 357–394 (SVAPHVLKTILLILKGKPGEMEDTVTEGKRFSLDITNL), and 418–458 (QYFP…LLNC).

The chain is Maestro heat-like repeat-containing protein family member 9 (MROH9) from Homo sapiens (Human).